A 263-amino-acid chain; its full sequence is Benzil reductase ((S)-benzoin forming) IRC24 (263 aa).

Residues Ile-7 and Asn-86 each coordinate NADP(+). Ser-143 (proton donor) is an active-site residue. Residues Tyr-157, Lys-161, Val-190, and Thr-192 each coordinate NADP(+). Tyr-157 acts as the Proton acceptor in catalysis. The active-site Lowers pKa of active site Tyr is the Lys-161.

This sequence belongs to the short-chain dehydrogenases/reductases (SDR) family.

It carries out the reaction (S)-benzoin + NADP(+) = benzil + NADPH + H(+). The enzyme catalyses 2-hydroxy-1-phenyl-1-propanone + NADP(+) = 1-phenyl-1,2-propanedione + NADPH + H(+). In terms of biological role, reduces benzil stereospecifically to (S)-benzoin. Also reduces 1-phenyl-1,2-propanedione to 2-hydroxy-1-phenyl-1-propanone. Is probably involved in a pathway contributing to genomic integrity. The protein is Benzil reductase ((S)-benzoin forming) IRC24 (IRC24) of Saccharomyces cerevisiae (strain ATCC 204508 / S288c) (Baker's yeast).